The following is a 198-amino-acid chain: Protein GrpE (198 aa).

The tract at residues Met-1–Glu-32 is disordered.

The protein belongs to the GrpE family. As to quaternary structure, homodimer.

It is found in the cytoplasm. In terms of biological role, participates actively in the response to hyperosmotic and heat shock by preventing the aggregation of stress-denatured proteins, in association with DnaK and GrpE. It is the nucleotide exchange factor for DnaK and may function as a thermosensor. Unfolded proteins bind initially to DnaJ; upon interaction with the DnaJ-bound protein, DnaK hydrolyzes its bound ATP, resulting in the formation of a stable complex. GrpE releases ADP from DnaK; ATP binding to DnaK triggers the release of the substrate protein, thus completing the reaction cycle. Several rounds of ATP-dependent interactions between DnaJ, DnaK and GrpE are required for fully efficient folding. This chain is Protein GrpE, found in Haemophilus ducreyi (strain 35000HP / ATCC 700724).